The sequence spans 915 residues: MFSTCSDGRPFQSFSTNLEDFDSIRSVLLYSDLEPEWLDDVQKNGQLFYLELSDGEEEALLAQVSANHSAATNHVRFSEKEAEIITDNAKRQANSSNKSEAKLKKLTKILRRKRRPSQRKAEGKDSSQRPASILKNQAGQRPGVVVQQQRLKDVCVYLNPKRLSSVSSSSADRGGLLEALLGVVHRPGGNTGKRGGKLIIHGLIPHSPASKCAEILIGDALVAVDDVEVTSENIERVLSCIPGPMQVRLTLETVCPAGVSPESKVSASPQVSQLVRLLWGEDTIELQMSIADVPHIAMFLSLRLDSETQQDEQEIVYQYPQSEASAQLKAVRGIFLTLCDMLENVTGGQIISSSLWLQQQLVHVGYWKEESNLLVIAVPASRVPLLYLQTVIEGVVRTLKVMYGSLDRGFSDVENAPRLDHFFCLFFQQLIQPSRLIHSSRTPDLYGSLFLDGLPAVRWLTLPPDIKVEVDTVLSDFESSDFGDMSEDFYGMRRLYVILGSCLFYKGYLIANHLPKEDLLDVCLYCQHYCLLPLASEQRVAQLVVWREVFPQRRETRNSTAHPGYCQPHARHFLLIVGLRHFMQCVLLEAGGCASSAVGRPTPDSVYVDQVKATLLQLESLDAGIEERLSAPPTPCLSCADWFLPAGGRSQQDTIGSSPILNRLTAAIKPPSPGGIGRSLFGEAGTVGIRGRRASPQRSQSDSGSEGHADGTPASVARRDSLGSGGSDGSLGSAGFLKMPRLKHPNPFYLGSLRKSLSERETEEMQNVLQVTAGVENTLFHYVLMESVQGIFIAPTHTEIRHLSGSIHPQLIHNFQHCCLSIRQAFQQSLPTRDRRGPERQSTAGLGPVKEHGVLFQCKPQNWTDQKKPAPTMTYWVIGRMLLEPVPQEFYVCFHDSVAEVPVEMAFRLSFGLAV.

The segment at asparagine 88–valine 144 is disordered. Basic residues predominate over residues lysine 104–glutamine 118. The span at glutamine 128–glycine 139 shows a compositional bias: polar residues. Positions serine 165–threonine 253 constitute a PDZ domain. Residues glycine 688 to lysine 738 are disordered.

This sequence belongs to the inturned family.

It localises to the cytoplasm. The protein localises to the cell surface. It is found in the cytoskeleton. The protein resides in the cilium basal body. In terms of biological role, plays a key role in ciliogenesis and embryonic development. Regulator of cilia formation by controlling the organization of the apical actin cytoskeleton and the positioning of the basal bodies at the apical cell surface, which in turn is essential for the normal orientation of elongating ciliary microtubules. Plays a key role in definition of cell polarity via its role in ciliogenesis but not via conversion extension. Has an indirect effect on hedgehog signaling. This is Protein inturned (intu) from Danio rerio (Zebrafish).